A 76-amino-acid polypeptide reads, in one-letter code: Histone acetyltransferase (76 aa).

In terms of assembly, physically interacts with histone H3 in infected macrophages.

It is found in the secreted. The protein localises to the host cytoplasm. It localises to the host nucleus. The catalysed reaction is L-lysyl-[protein] + acetyl-CoA = N(6)-acetyl-L-lysyl-[protein] + CoA + H(+). Its activity is regulated as follows. Is completely inhibited by anacardic acid, an inhibitor of HAT activity. Its function is as follows. Histone acetyltransferase, which by binding to the host chromatin, may manipulate the expression of host genes involved in anti-inflammatory responses to evade clearance and to survive in the intracellular milieu. Acetylates histone H3 at the 'Lys-9' and 'Lys-14' positions. The sequence is that of Histone acetyltransferase from Mycobacterium tuberculosis (strain CDC 1551 / Oshkosh).